We begin with the raw amino-acid sequence, 554 residues long: Wee1-like protein kinase 2-B (554 aa).

Disordered stretches follow at residues 1-86 and 145-182; these read MRMA…GGEC and TLVNVNPFTPQSYRQTHFQPNGKRKERPEDDCSSDSQM. A Phosphoserine modification is found at Ser38. Polar residues-rich tracts occupy residues 38–48 and 147–163; these read SPVSSWRTNNC and VNVNPFTPQSYRQTHFQ. One can recognise a Protein kinase domain in the interval 213-487; that stretch reads FLEIEKIGAG…AKNSVLRRCV (275 aa). Residues 219–227 and Lys242 each bind ATP; that span reads IGAGEFGSV. Asp340 (proton acceptor) is an active-site residue. Residues Asn345 and Asp377 each contribute to the Mg(2+) site. Residues 490–516 adopt a coiled-coil conformation; that stretch reads AAELQKQLNVEKFKTAMLERELQAAKL.

The protein belongs to the protein kinase superfamily. Ser/Thr protein kinase family. WEE1 subfamily. In terms of assembly, interacts with cdca3. In terms of processing, ubiquitinated and degraded at the onset of G2/M phase. Phosphorylated during M and G1 phases. Interacts with cdca3 when phosphorylated at Ser-38.

It is found in the nucleus. It catalyses the reaction L-tyrosyl-[protein] + ATP = O-phospho-L-tyrosyl-[protein] + ADP + H(+). Its function is as follows. Oocyte and early embryo-specific protein tyrosine kinase that phosphorylates and inhibits cdk1 and acts as a regulator of meiosis in oocytes. Required to ensure the meiotic cell cycle in oocytes by phosphorylating cdk1 at 'Tyr-15', leading to inhibit cdk1 activity and prevent meiosis. In Xenopus laevis (African clawed frog), this protein is Wee1-like protein kinase 2-B (wee2-b).